Reading from the N-terminus, the 200-residue chain is 3-isopropylmalate dehydratase small subunit (200 aa).

The protein belongs to the LeuD family. LeuD type 1 subfamily. As to quaternary structure, heterodimer of LeuC and LeuD.

The enzyme catalyses (2R,3S)-3-isopropylmalate = (2S)-2-isopropylmalate. It participates in amino-acid biosynthesis; L-leucine biosynthesis; L-leucine from 3-methyl-2-oxobutanoate: step 2/4. Its function is as follows. Catalyzes the isomerization between 2-isopropylmalate and 3-isopropylmalate, via the formation of 2-isopropylmaleate. The sequence is that of 3-isopropylmalate dehydratase small subunit from Yersinia pseudotuberculosis serotype O:1b (strain IP 31758).